We begin with the raw amino-acid sequence, 1291 residues long: Period circadian protein homolog 1 (1291 aa).

Positions Met1 to Thr134 are disordered. The segment at Met1–Pro151 is interaction with BTRC. A compositionally biased stretch (low complexity) spans Asn48–Glu115. Residues Gln116 to Ala132 are compositionally biased toward polar residues. Residue Thr121 is modified to Phosphothreonine; by CSNK1E. Phosphoserine; by CSNK1E occurs at positions 122 and 126. The short motif at Leu138–Leu147 is the Nuclear export signal 1 element. 2 PAS domains span residues Ile208–Leu275 and Tyr348–Gln414. The PAC domain occupies His422–Pro465. The Nuclear export signal 2 motif lies at Leu489–Leu498. Disordered regions lie at residues Gly508–Val544 and Thr647–Val698. Low complexity-rich tracts occupy residues Gly513–Gly533 and Ala652–Ala662. The interval Glu596 to Ser815 is required for phosphorylation by CSNK1E. Phosphoserine occurs at positions 661, 663, and 704. Disordered stretches follow at residues Gly749 to Ala772, Thr809 to Thr873, and Ser938 to Gly1037. The segment covering Ala751–Thr769 has biased composition (pro residues). Ser815 carries the phosphoserine modification. Residues Ile824–Arg840 carry the Nuclear localization signal motif. A compositionally biased stretch (basic residues) spans Gly827–Thr846. 2 stretches are compositionally biased toward pro residues: residues Ser859–Thr873 and Pro955–Pro965. The span at Phe973–Leu985 shows a compositional bias: polar residues. 2 positions are modified to phosphoserine: Ser978 and Ser979. The Nuclear export signal 3 motif lies at Leu981–Leu988. The LXXLL motif lies at Leu1042–Leu1046. Positions Arg1051–Ser1061 are enriched in low complexity. 2 disordered regions span residues Arg1051–Ser1099 and Ser1207–Ser1291. Over residues Leu1062–Glu1076 the composition is skewed to gly residues. Positions Gly1077–Ser1094 are enriched in low complexity. The segment at Ser1148–Ser1291 is CRY binding domain. Over residues Gly1235 to Asp1248 the composition is skewed to gly residues. The segment covering Ala1253 to Ser1267 has biased composition (polar residues).

Homodimer. Component of the circadian core oscillator, which includes the CRY proteins, CLOCK or NPAS2, BMAL1 or BMAL2, CSNK1D and/or CSNK1E, TIMELESS, and the PER proteins. Interacts directly with TIMELESS. Interacts directly with PER2, PER3, CRY1 and CRY2. Interacts with BMAL1 and CLOCK. Interacts with GPRASP1. Interacts (phosphorylated) with BTRC and FBXW11; the interactions trigger proteasomal degradation. Interacts with NONO and SFPQ. Interacts with WDR5. Interacts with U2AF1L4 (Isoform 3). Interacts with USP2. Interacts with HNF4A. Phosphorylated on serine residues by CSNK1D, CSNK1E and probably also by CSNK1G2. Phosphorylation by CSNK1D or CSNK1E promotes nuclear location of PER proteins as well as ubiquitination and subsequent degradation. May be dephosphorylated by PP1. In terms of processing, ubiquitinated; requires phosphorylation by CSNK1E and interaction with BTRC and FBXW11. Deubiquitinated by USP2. In terms of tissue distribution, in brain, highest expression is observed in the SCN. Highly expressed in the pyramidal cell layer of the piriform cortex, the periventricular part of the caudate-putamen, many thalamic nuclei, and the granular layer of the cerebellar cortex. Weaker expression is detected in most area of the brain, including cortical and non cortical structures. Expression but no oscillations occurs in the glomerular and mitral cell layers of the olfactory bulb, the internal granular layer of the cerebellum, the cornu ammonis and dentate gyrus of the hippocampus, the cerebral and piriform cortices. Expressed in the renal cortex (at protein level). Also found in heart, brain, bladder, lumbar spinal cord, spleen, lung, liver, skeletal muscle and testis.

It localises to the nucleus. The protein localises to the cytoplasm. Transcriptional repressor which forms a core component of the circadian clock. The circadian clock, an internal time-keeping system, regulates various physiological processes through the generation of approximately 24 hour circadian rhythms in gene expression, which are translated into rhythms in metabolism and behavior. It is derived from the Latin roots 'circa' (about) and 'diem' (day) and acts as an important regulator of a wide array of physiological functions including metabolism, sleep, body temperature, blood pressure, endocrine, immune, cardiovascular, and renal function. Consists of two major components: the central clock, residing in the suprachiasmatic nucleus (SCN) of the brain, and the peripheral clocks that are present in nearly every tissue and organ system. Both the central and peripheral clocks can be reset by environmental cues, also known as Zeitgebers (German for 'timegivers'). The predominant Zeitgeber for the central clock is light, which is sensed by retina and signals directly to the SCN. The central clock entrains the peripheral clocks through neuronal and hormonal signals, body temperature and feeding-related cues, aligning all clocks with the external light/dark cycle. Circadian rhythms allow an organism to achieve temporal homeostasis with its environment at the molecular level by regulating gene expression to create a peak of protein expression once every 24 hours to control when a particular physiological process is most active with respect to the solar day. Transcription and translation of core clock components (CLOCK, NPAS2, BMAL1, BMAL2, PER1, PER2, PER3, CRY1 and CRY2) plays a critical role in rhythm generation, whereas delays imposed by post-translational modifications (PTMs) are important for determining the period (tau) of the rhythms (tau refers to the period of a rhythm and is the length, in time, of one complete cycle). A diurnal rhythm is synchronized with the day/night cycle, while the ultradian and infradian rhythms have a period shorter and longer than 24 hours, respectively. Disruptions in the circadian rhythms contribute to the pathology of cardiovascular diseases, cancer, metabolic syndromes and aging. A transcription/translation feedback loop (TTFL) forms the core of the molecular circadian clock mechanism. Transcription factors, CLOCK or NPAS2 and BMAL1 or BMAL2, form the positive limb of the feedback loop, act in the form of a heterodimer and activate the transcription of core clock genes and clock-controlled genes (involved in key metabolic processes), harboring E-box elements (5'-CACGTG-3') within their promoters. The core clock genes: PER1/2/3 and CRY1/2 which are transcriptional repressors form the negative limb of the feedback loop and interact with the CLOCK|NPAS2-BMAL1|BMAL2 heterodimer inhibiting its activity and thereby negatively regulating their own expression. This heterodimer also activates nuclear receptors NR1D1/2 and RORA/B/G, which form a second feedback loop and which activate and repress BMAL1 transcription, respectively. Regulates circadian target genes expression at post-transcriptional levels, but may not be required for the repression at transcriptional level. Controls PER2 protein decay. Represses CRY2 preventing its repression on CLOCK/BMAL1 target genes such as FXYD5 and SCNN1A in kidney and PPARA in liver. Besides its involvement in the maintenance of the circadian clock, has an important function in the regulation of several processes. Participates in the repression of glucocorticoid receptor NR3C1/GR-induced transcriptional activity by reducing the association of NR3C1/GR to glucocorticoid response elements (GREs) by BMAL1:CLOCK. Plays a role in the modulation of the neuroinflammatory state via the regulation of inflammatory mediators release, such as CCL2 and IL6. In spinal astrocytes, negatively regulates the MAPK14/p38 and MAPK8/JNK MAPK cascades as well as the subsequent activation of NFkappaB. Coordinately regulates the expression of multiple genes that are involved in the regulation of renal sodium reabsorption. Can act as gene expression activator in a gene and tissue specific manner, in kidney enhances WNK1 and SLC12A3 expression in collaboration with CLOCK. Modulates hair follicle cycling. Represses the CLOCK-BMAL1 induced transcription of BHLHE40/DEC1. The polypeptide is Period circadian protein homolog 1 (Per1) (Mus musculus (Mouse)).